The chain runs to 185 residues: Protein C2-DOMAIN ABA-RELATED 9 (185 aa).

The region spanning 1–104 (MEDKPLGILR…LEAHQMELDF (104 aa)) is the C2 domain. Ca(2+)-binding residues include Arg-22, Asp-23, Asp-28, Asp-74, Lys-75, Asp-76, and Asp-82.

It belongs to the plant CAR protein family. In terms of assembly, binds to PYR/PYL/RCAR abscisic acid intracellular receptors in an ABA-independent manner, both at the plasma membrane and in the nucleus. Interacts with LOT1 in the nuleus; this interaction is repressed by abscisic acid (ABA) and is sensitive to calcium ion Ca(2+), leading to free CAR9 accumulation at the plasma membrane. Requires Ca(2+) as cofactor.

It is found in the cell membrane. The protein resides in the nucleus. Functionally, stimulates the GTPase/ATPase activities of Obg-like ATPases. Mediates the transient calcium-dependent interaction of PYR/PYL/RCAR abscisic acid (ABA) receptors with the plasma membrane and thus regulates ABA sensitivity. The sequence is that of Protein C2-DOMAIN ABA-RELATED 9 from Arabidopsis thaliana (Mouse-ear cress).